The sequence spans 352 residues: MGDTEQIPVGIIGASGYGGVQLVRLLIEHPNVEIVYLGGDSSAGKPYSDIYPHLFHCVNQPVEAIDIDEIASRCQVVFLGLPNGIACDLAPKLLEKGCKVLDLSADYRFRNLETYSTWYKKDRTDQAIAVRSVYGLPELYQQQIKESQLIGCPGCYPTASLLALAPLLKQGLIVPETAIIDAKSGTSGAGRQAKINALLAEADGSLGAYGVAKHRHTPEIEEVCSDLAGHEVTVQFTPHLIPMIRGILATVYATLRDPGLVREDLITIYNAFYRSSPFVKILPNGIYPQTKWACGTNLCYLGIEVDPRTDRVIVMSAIDNLIKGQAGQAVQCLNLMMGWEETLGLPQLCFYP.

The active site involves Cys155.

Belongs to the NAGSA dehydrogenase family. Type 1 subfamily.

It localises to the cytoplasm. It catalyses the reaction N-acetyl-L-glutamate 5-semialdehyde + phosphate + NADP(+) = N-acetyl-L-glutamyl 5-phosphate + NADPH + H(+). It participates in amino-acid biosynthesis; L-arginine biosynthesis; N(2)-acetyl-L-ornithine from L-glutamate: step 3/4. Catalyzes the NADPH-dependent reduction of N-acetyl-5-glutamyl phosphate to yield N-acetyl-L-glutamate 5-semialdehyde. The sequence is that of N-acetyl-gamma-glutamyl-phosphate reductase from Gloeothece citriformis (strain PCC 7424) (Cyanothece sp. (strain PCC 7424)).